Here is a 790-residue protein sequence, read N- to C-terminus: Phenylalanine--tRNA ligase beta subunit (790 aa).

Residues 39-147 (AKPFSGIVVG…ADAPVGVDVR (109 aa)) enclose the tRNA-binding domain. The 77-residue stretch at 400–476 (PAKALVNLRH…RLYGYNKLPV (77 aa)) folds into the B5 domain. Positions 454, 460, 463, and 464 each coordinate Mg(2+). The 94-residue stretch at 696 to 789 (SRFPEIRRDL…LGNRFGASLR (94 aa)) folds into the FDX-ACB domain.

The protein belongs to the phenylalanyl-tRNA synthetase beta subunit family. Type 1 subfamily. As to quaternary structure, tetramer of two alpha and two beta subunits. The cofactor is Mg(2+).

The protein localises to the cytoplasm. It carries out the reaction tRNA(Phe) + L-phenylalanine + ATP = L-phenylalanyl-tRNA(Phe) + AMP + diphosphate + H(+). The polypeptide is Phenylalanine--tRNA ligase beta subunit (Hahella chejuensis (strain KCTC 2396)).